The chain runs to 607 residues: MLSYQDKVGAFYKDNARANSSKLSLVTEEQGGRRPPYLLFVLLILLVGIMALLAITGVRFHQVSTSNMEFSRLLKEDMEKSEAVHHQVIDVLTPLFKIIGDEVGLRLPQKLNEIKQFILQKTNFFNPNREFDFRDLHWCINPPSKIKVNFTNYCDTIGIRKSIASAANPILLSAHTGGRGDIFPPYRCSGATTSVGRVFPLSVSLSMSLISRTSEIINMLTAISDGVYGKTYLLVPDYIEGEFDTQKIRVFEIGFIKRWLNDMPLLQTTNYMVLPENSKAKVCTIAVGELTLASLCVDESTILLYHDSNGSQDGILVVTLGIFGATPMDQVEEVIPVAHPSVEKIHITNHRGFIKDSIATWMVPALVSEKQEEQKSCLESACQRKSYPMCNQTSWEPFGGGQLPSYGRLTLPLDPSIDLQLNISFTYGPVILNGNGMDYYESPLLGSGWLTIPPKNGTVLGLINKAGRGDQFTVIPHVLTFAPRESSGNCYLPIQTSQIMDKDVLTESNLVVLPTQNFRYVIATYDISRGDHAIVYYVYDPIRTISYTHPFRLTTKGRPDFLRIECFVWDDDLWCHQFYRFETDSTNSTTSVENLVRIRFSCSRSKP.

The Intravirion portion of the chain corresponds to 1-37; the sequence is MLSYQDKVGAFYKDNARANSSKLSLVTEEQGGRRPPY. The helical transmembrane segment at 38 to 58 threads the bilayer; that stretch reads LLFVLLILLVGIMALLAITGV. Topologically, residues 59–607 are virion surface; the sequence is RFHQVSTSNM…IRFSCSRSKP (549 aa). Residues N149, N309, N391, N422, N456, and N587 are each glycosylated (N-linked (GlcNAc...) asparagine; by host).

This sequence belongs to the paramyxoviruses hemagglutinin-neuraminidase family. Non-sialidase subfamily. In terms of assembly, binds canine SLAMF1 at the cell surface.

Its subcellular location is the virion membrane. The protein localises to the host cell membrane. Functionally, attaches the virus to cell receptors and thereby initiating infection. Binding of H protein to the receptor induces a conformational change that allows the F protein to trigger virion/cell membranes fusion. The cellular receptor might be SLAM, and may explain the lymphotropism of the virus. The protein is Hemagglutinin glycoprotein (H) of Canine distemper virus (strain A92-6) (CDV).